The chain runs to 364 residues: Dihydroorotate dehydrogenase (quinone) (364 aa).

FMN is bound by residues 62–66 and T86; that span reads AGFDK. Residue K66 participates in substrate binding. 111–115 provides a ligand contact to substrate; sequence NRMGF. 2 residues coordinate FMN: N142 and N175. N175 serves as a coordination point for substrate. S178 functions as the Nucleophile in the catalytic mechanism. Substrate is bound at residue N180. Residues K216 and T244 each coordinate FMN. 245–246 contacts substrate; sequence NT. Residues G267, G296, and 317–318 each bind FMN; that span reads YT.

The protein belongs to the dihydroorotate dehydrogenase family. Type 2 subfamily. As to quaternary structure, monomer. The cofactor is FMN.

The protein resides in the cell membrane. The catalysed reaction is (S)-dihydroorotate + a quinone = orotate + a quinol. The protein operates within pyrimidine metabolism; UMP biosynthesis via de novo pathway; orotate from (S)-dihydroorotate (quinone route): step 1/1. Functionally, catalyzes the conversion of dihydroorotate to orotate with quinone as electron acceptor. This Anaeromyxobacter dehalogenans (strain 2CP-1 / ATCC BAA-258) protein is Dihydroorotate dehydrogenase (quinone).